The primary structure comprises 232 residues: Fibrillarin-like rRNA/tRNA 2'-O-methyltransferase (232 aa).

Residues 89 to 90 (TT), 108 to 109 (EF), 133 to 134 (DA), and 153 to 156 (DIAQ) contribute to the S-adenosyl-L-methionine site.

Belongs to the methyltransferase superfamily. Fibrillarin family. Interacts with nop5. Component of box C/D small ribonucleoprotein (sRNP) particles that contain rpl7ae, FlpA and nop5, plus a guide RNA.

Its function is as follows. Involved in pre-rRNA and tRNA processing. Utilizes the methyl donor S-adenosyl-L-methionine to catalyze the site-specific 2'-hydroxyl methylation of ribose moieties in rRNA and tRNA. Site specificity is provided by a guide RNA that base pairs with the substrate. Methylation occurs at a characteristic distance from the sequence involved in base pairing with the guide RNA. This is Fibrillarin-like rRNA/tRNA 2'-O-methyltransferase from Methanopyrus kandleri (strain AV19 / DSM 6324 / JCM 9639 / NBRC 100938).